A 209-amino-acid chain; its full sequence is Abscisic acid receptor PYL5 (209 aa).

The interval 44–196 (HAPGEHQCSS…NLTSLAEVSE (153 aa)) is START-like. Residues Cys51 and Cys177 are joined by a disulfide bond. Residues Lys80, 109 to 114 (ATTSTE), 136 to 142 (RLRNYSS), and Glu161 each bind abscisate. The Gate loop motif lies at 105–109 (TGLPA). Positions 135–137 (HRL) match the Latch loop motif.

This sequence belongs to the PYR/PYL/RCAR abscisic acid intracellular receptor family. As to quaternary structure, monomer. Interacts with PP2C30. Binding to PP2C30 is dependent on the presence of abscisic acid (ABA). Interacts with PP2C51. Binding to PP2C51 is dependent on the presence of ABA. Interacts with PP2C50. Binding to PP2C50 is dependent on the presence of ABA. Interacts with PP2C53. In terms of tissue distribution, expressed in leaf sheaths and leaf blades. Expressed at low levels in roots, flowers and seeds.

The protein resides in the nucleus. It localises to the cytoplasm. The protein localises to the cytosol. Intracellular abscisic acid (ABA) receptor that functions as a positive regulator of ABA signaling pathway. Together with ABI5, PP2C30 and SAPK2, is part of an ABA signaling unit that modulates seed germination and early seedling growth. Acts as a positive regulator of abiotic stress-responsive gene expression. Inhibits the protein phosphatases PP2C06 and PP2C09 when activated by ABA. This chain is Abscisic acid receptor PYL5, found in Oryza sativa subsp. japonica (Rice).